The following is a 307-amino-acid chain: Aspartate carbamoyltransferase catalytic subunit (307 aa).

Residues arginine 56 and threonine 57 each contribute to the carbamoyl phosphate site. Lysine 84 contacts L-aspartate. Residues arginine 106, histidine 136, and glutamine 139 each coordinate carbamoyl phosphate. Residues arginine 169 and arginine 221 each coordinate L-aspartate. Carbamoyl phosphate-binding residues include alanine 262 and proline 263.

It belongs to the aspartate/ornithine carbamoyltransferase superfamily. ATCase family. As to quaternary structure, heterododecamer (2C3:3R2) of six catalytic PyrB chains organized as two trimers (C3), and six regulatory PyrI chains organized as three dimers (R2).

It catalyses the reaction carbamoyl phosphate + L-aspartate = N-carbamoyl-L-aspartate + phosphate + H(+). The protein operates within pyrimidine metabolism; UMP biosynthesis via de novo pathway; (S)-dihydroorotate from bicarbonate: step 2/3. Catalyzes the condensation of carbamoyl phosphate and aspartate to form carbamoyl aspartate and inorganic phosphate, the committed step in the de novo pyrimidine nucleotide biosynthesis pathway. The protein is Aspartate carbamoyltransferase catalytic subunit of Streptococcus pneumoniae serotype 2 (strain D39 / NCTC 7466).